Here is a 158-residue protein sequence, read N- to C-terminus: Phosphopantetheine adenylyltransferase (158 aa).

Belongs to the eukaryotic CoaD family.

It is found in the cytoplasm. It catalyses the reaction (R)-4'-phosphopantetheine + ATP + H(+) = 3'-dephospho-CoA + diphosphate. The protein operates within cofactor biosynthesis; coenzyme A biosynthesis. Reversibly transfers an adenylyl group from ATP to 4'-phosphopantetheine, yielding dephospho-CoA (dPCoA) and pyrophosphate. This Pyrococcus horikoshii (strain ATCC 700860 / DSM 12428 / JCM 9974 / NBRC 100139 / OT-3) protein is Phosphopantetheine adenylyltransferase.